A 336-amino-acid polypeptide reads, in one-letter code: MLYRLARAGFFQLDAEKAHDLAIQNFKRFTGTPIDLFYRQQLPNRPVECMGLTFRNPVGLAAGLDKNGECIEAFDAMGFGFVEIGTVTPRAQSGNDKPRLFRLVGAEGIINRMGFNNLGVDNLIENVKKAKYSCVLGINIGKNKDTPIEKGAEDYLICMEKVYEYAGYIAVNISSPNTPGLRTLQYGEALDELLVELKRKQAELEEKHGKYVPLALKIAPDLTDDEISQICQSLINNKIDGVIATNTTLDRTMVEGMKYAQEAGGLSGRPLQSRSTEVVRLLRKELQGNIPIIGVGGVDSYVAAKEKMLAGADLVQVYSGFIYHGPGLVRDIVKNL.

Residues 62–66 (AGLDK) and Thr-86 contribute to the FMN site. Position 66 (Lys-66) interacts with substrate. 111-115 (NRMGF) lines the substrate pocket. 2 residues coordinate FMN: Asn-139 and Asn-172. Residue Asn-172 participates in substrate binding. The active-site Nucleophile is the Ser-175. Asn-177 contacts substrate. Lys-217 and Thr-245 together coordinate FMN. A substrate-binding site is contributed by 246 to 247 (NT). FMN contacts are provided by residues Gly-268, Gly-297, and 318 to 319 (YS).

The protein belongs to the dihydroorotate dehydrogenase family. Type 2 subfamily. In terms of assembly, monomer. FMN is required as a cofactor.

Its subcellular location is the cell membrane. The catalysed reaction is (S)-dihydroorotate + a quinone = orotate + a quinol. Its pathway is pyrimidine metabolism; UMP biosynthesis via de novo pathway; orotate from (S)-dihydroorotate (quinone route): step 1/1. Functionally, catalyzes the conversion of dihydroorotate to orotate with quinone as electron acceptor. This chain is Dihydroorotate dehydrogenase (quinone), found in Vibrio vulnificus (strain YJ016).